A 72-amino-acid polypeptide reads, in one-letter code: Large ribosomal subunit protein bL28 (72 aa).

The protein belongs to the bacterial ribosomal protein bL28 family.

The polypeptide is Large ribosomal subunit protein bL28 (Chlorobium phaeobacteroides (strain DSM 266 / SMG 266 / 2430)).